The following is a 442-amino-acid chain: Chitinase-like protein Idgf4 (442 aa).

The signal sequence occupies residues 1 to 21 (MKLYALFSLLVGSLAIGQISA). In terms of domain architecture, GH18 spans 25 to 442 (HHLLCYYDGN…PILRQVKSKL (418 aa)). An intrachain disulfide couples Cys29 to Cys56. The N-linked (GlcNAc...) asparagine glycan is linked to Asn224. A disulfide bridge connects residues Cys343 and Cys426.

It belongs to the glycosyl hydrolase 18 family. IDGF subfamily. Glycosylated. Primarily expressed in yolk cells and fat body. In larvae, it is expressed in the imaginal ring, the salivary duct, large salivary gland cells and weakly expressed in imaginal disks. More strongly expressed than Idgf1 and Idgf3.

It localises to the secreted. In terms of biological role, cooperates with insulin-like peptides to stimulate the proliferation, polarization and motility of imaginal disk cells. May act by stabilizing the binding of insulin-like peptides to its receptor through a simultaneous interaction with both molecules to form a multiprotein signaling complex. The polypeptide is Chitinase-like protein Idgf4 (Idgf4) (Drosophila melanogaster (Fruit fly)).